Reading from the N-terminus, the 384-residue chain is MNRIWLRAIILTASSALLAGCQFGGLNSLPLPGTAGHGEGAYSVTVEMADVATLPQNSPVMVDDVTVGSVAGIVAVQRPDGSFYAAVKLDLDKNVLLPANAVAKVSQTSLLGSLHVELAPPTDRPPTGRLVDGSRITEANTDRFPTTEEVFSALGVVVNKGNVGALEEIIDETHQAVAGRQAQFVNLVPRLAELTAGLNRQVHDIIDALDGLNRVSAILARDKDNLGRALDTLPDAVRVLNQNRDHIVDAFAALKRLTMVTSHVLAETKVDFGEDLKDLYSIVKALNDDRKDFVTSLQLLLTFPFPNFGIKQAVRGDYLNVFTTFDLTLRRIGETFFTTAYFDPNMAHMDEILNPPDFLIGELANLSGQAADPFKIPPGTASGQ.

The first 20 residues, 1–20 (MNRIWLRAIILTASSALLAG), serve as a signal peptide directing secretion. C21 is lipidated: N-palmitoyl cysteine. C21 carries the S-diacylglycerol cysteine lipid modification.

Post-translationally, lipidated upon expression in E.coli.

Its subcellular location is the cell membrane. Stimulates the host (mouse) immune response; lipidated protein produced in E.coli stimulates T-cell proliferation in mice previously sensitized with LprN. Spleenocytes from these mice produce increased amounts of TNF-alpha and IFN-gamma, as well as somewhat increased nitric oxide levels, upon subsequent challenge with LprN. Previously sensitized mice infected with M.tuberculosis have an exacerbated disease response, suggesting this lipoprotein may down-regulate the host's immune response. This Mycobacterium tuberculosis (strain ATCC 25618 / H37Rv) protein is Lipoprotein LprN (lprN).